Consider the following 279-residue polypeptide: Undecaprenyl-diphosphatase (279 aa).

6 helical membrane-spanning segments follow: residues 45–65 (FVEM…IVIY), 85–105 (WQLW…ALPF), 113–133 (FNFM…FIWV), 188–208 (SVAA…YSGL), 226–246 (LILL…IRFL), and 255–275 (FTIF…YWLV).

This sequence belongs to the UppP family.

Its subcellular location is the cell membrane. The catalysed reaction is di-trans,octa-cis-undecaprenyl diphosphate + H2O = di-trans,octa-cis-undecaprenyl phosphate + phosphate + H(+). Catalyzes the dephosphorylation of undecaprenyl diphosphate (UPP). Confers resistance to bacitracin. This is Undecaprenyl-diphosphatase from Streptococcus agalactiae serotype Ia (strain ATCC 27591 / A909 / CDC SS700).